Here is a 461-residue protein sequence, read N- to C-terminus: O-methyltransferase CTB2 (461 aa).

Asp288 contacts S-adenosyl-L-methionine. His339 serves as the catalytic Proton acceptor.

Belongs to the class I-like SAM-binding methyltransferase superfamily. Cation-independent O-methyltransferase family. COMT subfamily.

The protein operates within mycotoxin biosynthesis. Functionally, O-methyltransferase; part of the gene cluster that mediates the biosynthesis of cercosporin, a light-activated, non-host-selective toxin. The perylenequinone chromophore of cercosporin absorbs light energy to attain an electronically-activated triplet state and produces active oxygen species such as the hydroxyl radical, superoxide, hydrogen peroxide or singlet oxygen upon reaction with oxygen molecules. These reactive oxygen species cause damage to various cellular components including lipids, proteins and nucleic acids. The first step of cercosporin biosynthesis is performed by the polyketide synthase CTB1 which catalyzes the formation of nor-toralactone. The starter unit acyltransferase (SAT) domain of CTB1 initiates polyketide extension by the selective utilization of acetyl-CoA, which is elongated to the heptaketide in the beta-ketoacyl synthase (KS) domain by successive condensations with six malonyl units introduced by the malonyl acyltransferase (MAT) domain. The product template (PT) domain catalyzes C4-C9 and C2-C11 aldol cyclizations and dehydrations to a trihydroxynaphthalene, which is thought to be delivered to the thioesterase (TE) domain for product release. The bifunctional enzyme CTB3 then methylates nor-toralactone to toralactone before conducting an unusual oxidative aromatic ring opening. The O-methyltransferase CTB2 further methylates the nascent OH-6 of the CBT3 product, blocking further oxidation at this site before the reductase CTB6 reduces the 2-oxopropyl ketone at position C7, giving naphthalene. The FAD-dependent monooxygenase CTB5 in concert with the multicopper oxidase CTB12 are responsible for homodimerization of naphthalene with CTB7 installing the dioxepine moiety, finally producing cercosporin. The fasciclin domain-containing protein CTB11 might act with CTB5 and CTB12 whereas the roles of CTB9 and CTB10 have still to be elucidated. The chain is O-methyltransferase CTB2 from Cercospora nicotianae (Barn spot disease fungus).